Reading from the N-terminus, the 146-residue chain is Anti-sigma F factor (146 aa).

Belongs to the anti-sigma-factor family.

The enzyme catalyses L-seryl-[protein] + ATP = O-phospho-L-seryl-[protein] + ADP + H(+). It carries out the reaction L-threonyl-[protein] + ATP = O-phospho-L-threonyl-[protein] + ADP + H(+). Its function is as follows. Binds to sigma F and blocks its ability to form an RNA polymerase holoenzyme (E-sigma F). Phosphorylates SpoIIAA on a serine residue. This phosphorylation may enable SpoIIAA to act as an anti-anti-sigma factor that counteracts SpoIIAB and thus releases sigma F from inhibition. The protein is Anti-sigma F factor of Lysinibacillus sphaericus (Bacillus sphaericus).